We begin with the raw amino-acid sequence, 57 residues long: RPSFCNLPVKPGPCNGFFSAFYYSQKTNKCHSFTYGGCKGNANRFSTIEKCRRTCVG.

The BPTI/Kunitz inhibitor domain occupies 5-55 (CNLPVKPGPCNGFFSAFYYSQKTNKCHSFTYGGCKGNANRFSTIEKCRRTC). 3 cysteine pairs are disulfide-bonded: cysteine 5–cysteine 55, cysteine 14–cysteine 38, and cysteine 30–cysteine 51. An important for binding V2R region spans residues 15–16 (NG).

Belongs to the venom Kunitz-type family. Expressed by the venom gland.

Its subcellular location is the secreted. In terms of biological role, selectively interacts with vasopressin V2 receptor (V2R/AVPR2) and fully inhibits three major signaling pathways of this receptor that are GalphaS protein, the interaction with beta-arrestin and activation of MAP kinase. Inhibits vasopressin binding human V2R in the nanomolar range (Ki=5.02 nM), and also potently inhibits vasopressin-induced cAMP production (IC(50)=94 nM). In vivo, this protein shows an aquaretic effect. Urine output increases and urine osmolality decreases dramatically under treatment with this protein, without differences observed between healthy mice and the pcy mice model of the autosomal-dominant polycystic kidney disease (ADPKD). This protein does not modify electrolyte, protein and urea excretions in the urine samples, but produces a 3-fold decrease of creatinine levels. Intraperitoneal injection of this protein into the pcy mice significantly reduces the number of renal cysts and the total area of cysts. This protein also shows high efficacy in preventing hyponatremia in rat models (induced by DAVP). Is highly visible in mice liver and kidney after intravenous injection. Is rapidly eliminated in the liver, whereas it exhibits slow elimination in the kidney due to the high expression of V2R which acts as a reservoir. In addition, its elimination from blood is rapid. Fluorescent MQ1 probes could also be used for imaging V2R-overexpressing cancer cells; note that these probes label the three renal cancer cell lines CAKI-2, ACHN and A498 that highly express V2R. In vivo, does not show any toxicity on animals, even at highest doses tested, such as prostration, spidy coat, appetite or weight loss. The polypeptide is Mambaquaretin-1 (Dendroaspis angusticeps (Eastern green mamba)).